A 95-amino-acid chain; its full sequence is Large ribosomal subunit protein bL25 (95 aa).

Belongs to the bacterial ribosomal protein bL25 family. As to quaternary structure, part of the 50S ribosomal subunit; part of the 5S rRNA/L5/L18/L25 subcomplex. Contacts the 5S rRNA. Binds to the 5S rRNA independently of L5 and L18.

This is one of the proteins that binds to the 5S RNA in the ribosome where it forms part of the central protuberance. The polypeptide is Large ribosomal subunit protein bL25 (Shewanella putrefaciens (strain CN-32 / ATCC BAA-453)).